The sequence spans 299 residues: ATP phosphoribosyltransferase (299 aa).

The protein belongs to the ATP phosphoribosyltransferase family. Long subfamily. Requires Mg(2+) as cofactor.

Its subcellular location is the cytoplasm. The enzyme catalyses 1-(5-phospho-beta-D-ribosyl)-ATP + diphosphate = 5-phospho-alpha-D-ribose 1-diphosphate + ATP. It participates in amino-acid biosynthesis; L-histidine biosynthesis; L-histidine from 5-phospho-alpha-D-ribose 1-diphosphate: step 1/9. Its activity is regulated as follows. Feedback inhibited by histidine. Catalyzes the condensation of ATP and 5-phosphoribose 1-diphosphate to form N'-(5'-phosphoribosyl)-ATP (PR-ATP). Has a crucial role in the pathway because the rate of histidine biosynthesis seems to be controlled primarily by regulation of HisG enzymatic activity. This chain is ATP phosphoribosyltransferase, found in Shewanella denitrificans (strain OS217 / ATCC BAA-1090 / DSM 15013).